Consider the following 282-residue polypeptide: Anamorsin homolog (282 aa).

An N-terminal SAM-like domain region spans residues methionine 1–alanine 140. Residues proline 141–alanine 192 form a linker region. [2Fe-2S] cluster is bound by residues cysteine 203, cysteine 214, cysteine 217, and cysteine 219. Residues cysteine 203–cysteine 219 are fe-S binding site A. The [4Fe-4S] cluster site is built by cysteine 243, cysteine 246, cysteine 254, and cysteine 257. 2 consecutive short sequence motifs (cx2C motif) follow at residues cysteine 243–cysteine 246 and cysteine 254–cysteine 257. The segment at cysteine 243–cysteine 257 is fe-S binding site B.

This sequence belongs to the anamorsin family. In terms of assembly, monomer. Requires [2Fe-2S] cluster as cofactor. The cofactor is [4Fe-4S] cluster.

The protein resides in the cytoplasm. It localises to the mitochondrion intermembrane space. Component of the cytosolic iron-sulfur (Fe-S) protein assembly (CIA) machinery. Required for the maturation of extramitochondrial Fe-S proteins. Part of an electron transfer chain functioning in an early step of cytosolic Fe-S biogenesis, facilitating the de novo assembly of a [4Fe-4S] cluster on the cytosolic Fe-S scaffold complex. Electrons are transferred from NADPH via a FAD- and FMN-containing diflavin oxidoreductase. Together with the diflavin oxidoreductase, also required for the assembly of the diferric tyrosyl radical cofactor of ribonucleotide reductase (RNR), probably by providing electrons for reduction during radical cofactor maturation in the catalytic small subunit. This Monosiga brevicollis (Choanoflagellate) protein is Anamorsin homolog.